The following is a 119-amino-acid chain: Holo-[acyl-carrier-protein] synthase (119 aa).

Mg(2+)-binding residues include Asp-8 and Glu-53.

Belongs to the P-Pant transferase superfamily. AcpS family. Requires Mg(2+) as cofactor.

Its subcellular location is the cytoplasm. It carries out the reaction apo-[ACP] + CoA = holo-[ACP] + adenosine 3',5'-bisphosphate + H(+). Its function is as follows. Transfers the 4'-phosphopantetheine moiety from coenzyme A to a Ser of acyl-carrier-protein. The sequence is that of Holo-[acyl-carrier-protein] synthase from Petrotoga mobilis (strain DSM 10674 / SJ95).